Here is a 131-residue protein sequence, read N- to C-terminus: Hydrogenase maturation factor HypA (131 aa).

H2 provides a ligand contact to Ni(2+). The Zn(2+) site is built by C74, C77, C91, and C94.

The protein belongs to the HypA/HybF family.

Its function is as follows. Involved in the maturation of [NiFe] hydrogenases. Required for nickel insertion into the metal center of the hydrogenase. This chain is Hydrogenase maturation factor HypA, found in Streptomyces avermitilis (strain ATCC 31267 / DSM 46492 / JCM 5070 / NBRC 14893 / NCIMB 12804 / NRRL 8165 / MA-4680).